The following is a 260-amino-acid chain: MEMKKKINMELKNRAPEEVTELVLDNCLCVNGEIEGLNDTFKELEFLSMANVELSSLARLPSLNKLRKLELSDNIISGGLEVLAEKCPNLTYLNLSGNKIKDLSTVEALQNLKNLKSLDLFNCEITNLEDYRESIFELLQQITYLDGFDQEDNEAPDSEEEDDDDEDGDEDEEDEDEDEAGPPEGYEEEEDDDEDEAGSEVGEGEEEVGLSYLMKDEIQDEEDDDDYVDEGEEEEEEEEEGLRGEKRKRDAEDDGEEDDD.

Residue methionine 1 is modified to N-acetylmethionine. LRR repeat units follow at residues 18-38 (EVTE…EGLN), 43-64 (ELEF…PSLN), 65-87 (KLRK…AEKC), and 89-110 (NLTY…EALQ). Lysine 68 participates in a covalent cross-link: Glycyl lysine isopeptide (Lys-Gly) (interchain with G-Cter in SUMO2). Residues 123–161 (CEITNLEDYRESIFELLQQITYLDGFDQEDNEAPDSEEE) form the LRRCT domain. 2 stretches are compositionally biased toward acidic residues: residues 149-208 (DQED…EEEV) and 218-240 (IQDE…EEEE). Positions 149 to 260 (DQEDNEAPDS…AEDDGEEDDD (112 aa)) are disordered. The interval 207-260 (EVGLSYLMKDEIQDEEDDDDYVDEGEEEEEEEEEGLRGEKRKRDAEDDGEEDDD) is ZID domain. Residues 241–251 (GLRGEKRKRDA) show a composition bias toward basic and acidic residues.

This sequence belongs to the ANP32 family. As to quaternary structure, component of a SWR1-like complex, composed of EP400, KAT5/TIP60, TRRAP, BRD8, RUVBL1, RUVBL2, ING3 and ANP32E; the complex does not contain SRCAP. Interacts with H2A.Z/H2AZ1. Interacts with the importin alpha KPNA1 and KPNA2. Post-translationally, phosphorylated. The phosphorylation is nuclear localization signal (NLS)-dependent. In terms of tissue distribution, expressed at highest levels in cerebellum and spleen. In the cerebellum, expressed mainly in granule cells and, to a lesser extent, in Purkinje cells.

Its subcellular location is the cytoplasm. It localises to the nucleus. Histone chaperone that specifically mediates the genome-wide removal of histone H2A.Z/H2AZ1 from the nucleosome: removes H2A.Z/H2AZ1 from its normal sites of deposition, especially from enhancer and insulator regions. Not involved in deposition of H2A.Z/H2AZ1 in the nucleosome. May stabilize the evicted H2A.Z/H2AZ1-H2B dimer, thus shifting the equilibrium towards dissociation and the off-chromatin state. Inhibits activity of protein phosphatase 2A (PP2A). Does not inhibit protein phosphatase 1. May play a role in cerebellar development and synaptogenesis. This is Acidic leucine-rich nuclear phosphoprotein 32 family member E (Anp32e) from Mus musculus (Mouse).